The primary structure comprises 107 residues: Cytochrome c-550 (107 aa).

Residues cysteine 11, cysteine 14, histidine 15, and methionine 80 each coordinate heme c.

Post-translationally, binds 1 heme c group covalently per subunit.

The polypeptide is Cytochrome c-550 (Ancylobacter novellus (Thiobacillus novellus)).